A 205-amino-acid chain; its full sequence is ATP phosphoribosyltransferase (205 aa).

Belongs to the ATP phosphoribosyltransferase family. Short subfamily. Heteromultimer composed of HisG and HisZ subunits.

It localises to the cytoplasm. The catalysed reaction is 1-(5-phospho-beta-D-ribosyl)-ATP + diphosphate = 5-phospho-alpha-D-ribose 1-diphosphate + ATP. It functions in the pathway amino-acid biosynthesis; L-histidine biosynthesis; L-histidine from 5-phospho-alpha-D-ribose 1-diphosphate: step 1/9. Its function is as follows. Catalyzes the condensation of ATP and 5-phosphoribose 1-diphosphate to form N'-(5'-phosphoribosyl)-ATP (PR-ATP). Has a crucial role in the pathway because the rate of histidine biosynthesis seems to be controlled primarily by regulation of HisG enzymatic activity. In Helicobacter hepaticus (strain ATCC 51449 / 3B1), this protein is ATP phosphoribosyltransferase.